Reading from the N-terminus, the 1545-residue chain is Tricalbin-3 (1545 aa).

The disordered stretch occupies residues 1–89 (MTGIKAQVHP…SNPEGKKQSS (89 aa)). At 1-206 (MTGIKAQVHP…AYILENFYND (206 aa)) the chain is on the cytoplasmic side. Residues 62 to 80 (TKTSNSVSDVSKGQKTADS) show a composition bias toward polar residues. Phosphoserine is present on residues Ser67 and Ser112. Residues 207–227 (WYCNIATVLGTCFFSWLFAYI) form a helical membrane-spanning segment. Gly228 is a topological domain (extracellular). Residues 229–249 (FSWWSMIFIFLGTATVYNAEY) form a helical membrane-spanning segment. The Cytoplasmic portion of the chain corresponds to 250–1545 (TRFNRNIRDD…VPEVPQEYTQ (1296 aa)). An SMP-LTD domain is found at 272–479 (RVESTTWLNS…PPNHLDINVE (208 aa)). A C2 1 domain is found at 470-596 (PPNHLDINVE…LQNPVLDNQT (127 aa)). Residues 620–660 (EDKSEEKAVERAEAKAKGKKEDENEDTTEKEEDENEESSQT) are a coiled coil. The segment covering 624 to 641 (EEKAVERAEAKAKGKKED) has biased composition (basic and acidic residues). A disordered region spans residues 624–660 (EEKAVERAEAKAKGKKEDENEDTTEKEEDENEESSQT). Acidic residues predominate over residues 642 to 658 (ENEDTTEKEEDENEESS). 2 C2 domains span residues 646 to 763 (TTEK…AQEF) and 783 to 897 (MTGA…SGKY). A coiled-coil region spans residues 937 to 972 (SPEELVNVEKLEKELKEKKKKFEATQEENEQEMEKN). The region spanning 1119–1234 (PTSVKLPSSE…EVGKTYNWNL (116 aa)) is the C2 4 domain. 5 residues coordinate Ca(2+): Asp1150, Asp1156, Asp1204, Asp1206, and Asp1212. Positions 1304-1404 (LLKSLGGNPM…NSRGHSRASS (101 aa)) are disordered. Positions 1318–1328 (SSNGNESNGAK) are enriched in polar residues. Residues 1329–1340 (KSSEKKSFDRRS) are compositionally biased toward basic and acidic residues. Residues Ser1340, Ser1342, and Ser1346 each carry the phosphoserine modification. A compositionally biased stretch (polar residues) spans 1341–1351 (PSNLNSTSVTP). Thr1350 is subject to Phosphothreonine. Ser1354 carries the post-translational modification Phosphoserine. The segment covering 1361–1373 (VPNTSYAPVQSAS) has biased composition (polar residues). Over residues 1377 to 1404 (KPTDNTSSSSNKKDTPSSNSRGHSRASS) the composition is skewed to low complexity. The 119-residue stretch at 1396 to 1514 (SRGHSRASSF…QQDGQISVKL (119 aa)) folds into the C2 5 domain. Ser1400 carries the post-translational modification Phosphoserine.

It belongs to the tricalbin family. As to quaternary structure, interacts with TCB2 via its C-terminal domain. Ca(2+) is required as a cofactor.

The protein resides in the cell membrane. Its subcellular location is the endoplasmic reticulum membrane. In terms of biological role, may play a role in membrane trafficking. The polypeptide is Tricalbin-3 (TCB3) (Saccharomyces cerevisiae (strain ATCC 204508 / S288c) (Baker's yeast)).